The chain runs to 212 residues: ER lumen protein-retaining receptor 2 (212 aa).

Topologically, residues Met-1–Phe-4 are lumenal. The chain crosses the membrane as a helical span at residues Arg-5 to Trp-24. The Cytoplasmic portion of the chain corresponds to Lys-25–Ile-32. The chain crosses the membrane as a helical span at residues Ser-33–Leu-52. The interaction with the K-D-E-L motif on target proteins stretch occupies residues Arg-47 to Tyr-48. Residues Thr-53–Leu-58 are Lumenal-facing. Residues Tyr-59–Tyr-79 traverse the membrane as a helical segment. The Cytoplasmic segment spans residues Ala-80–Thr-92. A helical membrane pass occupies residues Phe-93–Asn-110. At His-111–Leu-116 the chain is on the lumenal side. The chain crosses the membrane as a helical span at residues Glu-117–Leu-135. At Phe-136–Thr-149 the chain is on the cytoplasmic side. A helical transmembrane segment spans residues His-150–Trp-168. The segment at Arg-159–Arg-169 is interaction with the K-D-E-L motif on target proteins. At Arg-169–Met-178 the chain is on the lumenal side. Residues Ile-179 to Val-199 form a helical membrane-spanning segment. Residues Thr-200–Ala-212 lie on the Cytoplasmic side of the membrane. An important for recycling of cargo proteins with the sequence motif K-D-E-L from the Golgi to the endoplasmic reticulum region spans residues Lys-204–Lys-207.

This sequence belongs to the ERD2 family.

It is found in the endoplasmic reticulum membrane. The protein localises to the golgi apparatus membrane. The protein resides in the cytoplasmic vesicle. Its subcellular location is the COPI-coated vesicle membrane. Receptor for the C-terminal sequence motif K-D-E-L that is present on endoplasmic reticulum resident proteins and that mediates their recycling from the Golgi back to the endoplasmic reticulum. Binding is pH dependent, and is optimal at pH 5-5.4. This Danio rerio (Zebrafish) protein is ER lumen protein-retaining receptor 2 (kdelr2).